A 119-amino-acid chain; its full sequence is Ribonuclease P protein component (119 aa).

The protein belongs to the RnpA family. In terms of assembly, consists of a catalytic RNA component (M1 or rnpB) and a protein subunit.

It carries out the reaction Endonucleolytic cleavage of RNA, removing 5'-extranucleotides from tRNA precursor.. Its function is as follows. RNaseP catalyzes the removal of the 5'-leader sequence from pre-tRNA to produce the mature 5'-terminus. It can also cleave other RNA substrates such as 4.5S RNA. The protein component plays an auxiliary but essential role in vivo by binding to the 5'-leader sequence and broadening the substrate specificity of the ribozyme. This chain is Ribonuclease P protein component, found in Borreliella burgdorferi (strain ZS7) (Borrelia burgdorferi).